The following is a 439-amino-acid chain: MFNNSIHKVSICIALTLTFSANAMAVTEIPFWHSMEGELGKEVDSIADRFNQSQPDYKIVPVYKGNYEQSLAAGIAAFRSGKAPAILQVYEVGTATMMASKAIKPVYQVFKDANIDFDESVFVPTVAGYYTDSKTGRLLSQPFNSSTPVLYYNKEAFKKAGLDPEQPPKTWQELAADTAKLRAAGSSCGYASGWQGWIQIENFSAWHGQPIASRNNGFDGTDAVLEFNKPLQIKHIQLLSDMNKKGDFTYFGRKDESTSKFYNGDCAITTASSGSLASIRHYAKFNFGVGMMPYDADAKNAPQNAIIGGASLWVMDGKDKETYKGVAEFLQYLVKPEIAAEWHQKTGYLPITTAAYELTKQQGFYEQNPGADVATRQMLNKPPLPYTKGLRLGNMPQIRTVVDEELEAVWTGKKTPQAALDNSVKRGDVLLRRFEQANK.

Positions 1–25 (MFNNSIHKVSICIALTLTFSANAMA) are cleaved as a signal peptide. Sn-glycerol 3-phosphate is bound by residues Y67, E91, S146, S272, G309, Y348, and R399.

The protein belongs to the bacterial solute-binding protein 1 family. The complex is composed of two ATP-binding proteins (UgpC), two transmembrane proteins (UgpA and UgpE) and a solute-binding protein (UgpB).

Its subcellular location is the periplasm. Functionally, part of the ABC transporter complex UgpBAEC involved in sn-glycerol-3-phosphate (G3P) import. Binds G3P. The polypeptide is sn-glycerol-3-phosphate-binding periplasmic protein UgpB (ugpB) (Yersinia pseudotuberculosis serotype I (strain IP32953)).